Here is a 337-residue protein sequence, read N- to C-terminus: Trace amine-associated receptor 5 (337 aa).

Over 1–34 (MRAVFIQGAEEHPAAFCYQVNGSCPRTVHTLGIQ) the chain is Extracellular. Asn-21 carries an N-linked (GlcNAc...) asparagine glycan. Disulfide bonds link Cys-24/Cys-188 and Cys-99/Cys-192. Residues 35–55 (LVIYLACAAGMLIIVLGNLFV) traverse the membrane as a helical segment. Topologically, residues 56 to 70 (AFAVSYFKALHTPTN) are cytoplasmic. Residues 71–91 (FLLLSLALADMFLGLLVLPLS) traverse the membrane as a helical segment. The Extracellular portion of the chain corresponds to 92–109 (TIRSVESCWFFGDFLCRL). Residues 110–130 (HTYLDPLFCLTSIFHLCFISI) traverse the membrane as a helical segment. Residues 131-154 (DRHCAICDPLLYPSKFTVRVALRY) lie on the Cytoplasmic side of the membrane. A helical transmembrane segment spans residues 155–175 (ILAGWGVPAAYTSLFLYTDVV). Positions 176–189 (ETRLSQWLEEMPCV) are extracellular Loop 2 (ECL2). Residues 176 to 204 (ETRLSQWLEEMPCVGSCQLLLNKFWGWLN) lie on the Extracellular side of the membrane. Residues 205-225 (FPLFFVPCLIMISLYVKIFVV) traverse the membrane as a helical segment. Topologically, residues 226–253 (ATRQAQQITTLSKNLAGAAKHDRKAAKT) are cytoplasmic. Residues 254 to 274 (LGIAVGIYLLCWLPFTIDTMV) form a helical membrane-spanning segment. The Extracellular segment spans residues 275–284 (DSLLHFITPP). Residues 285–307 (LVFDIFIWFAYFNSACNPIIYVF) form a helical membrane-spanning segment. The Cytoplasmic segment spans residues 308–337 (SYQWFRKALKLTLSQKVFSPQTRTVDLYQE).

It belongs to the G-protein coupled receptor 1 family.

The protein localises to the cell membrane. Olfactory receptor specific for trimethylamine, a trace amine. Trimethylamine is a bacterial metabolite found in some animal odors. Trimethylamine-binding causes a conformation change that triggers signaling via G(s)-class of G alpha proteins (GNAL or GNAS). In Pan troglodytes (Chimpanzee), this protein is Trace amine-associated receptor 5 (TAAR5).